Consider the following 796-residue polypeptide: Leucine--tRNA ligase (796 aa).

The short motif at 40–51 is the 'HIGH' region element; the sequence is PYPSASGLHVGH. The short motif at 569–573 is the 'KMSKS' region element; the sequence is KMSKS. Lys-572 provides a ligand contact to ATP.

The protein belongs to the class-I aminoacyl-tRNA synthetase family.

The protein localises to the cytoplasm. It carries out the reaction tRNA(Leu) + L-leucine + ATP = L-leucyl-tRNA(Leu) + AMP + diphosphate. The protein is Leucine--tRNA ligase of Bdellovibrio bacteriovorus (strain ATCC 15356 / DSM 50701 / NCIMB 9529 / HD100).